A 1092-amino-acid chain; its full sequence is Isoleucine--tRNA ligase (1092 aa).

Residues P53 to H63 carry the 'HIGH' region motif. A 'KMSKS' region motif is present at residues K613 to R617. K616 is an ATP binding site.

Belongs to the class-I aminoacyl-tRNA synthetase family. IleS type 2 subfamily. Monomer. Zn(2+) serves as cofactor.

It localises to the cytoplasm. It carries out the reaction tRNA(Ile) + L-isoleucine + ATP = L-isoleucyl-tRNA(Ile) + AMP + diphosphate. Its function is as follows. Catalyzes the attachment of isoleucine to tRNA(Ile). As IleRS can inadvertently accommodate and process structurally similar amino acids such as valine, to avoid such errors it has two additional distinct tRNA(Ile)-dependent editing activities. One activity is designated as 'pretransfer' editing and involves the hydrolysis of activated Val-AMP. The other activity is designated 'posttransfer' editing and involves deacylation of mischarged Val-tRNA(Ile). This Rickettsia peacockii (strain Rustic) protein is Isoleucine--tRNA ligase.